We begin with the raw amino-acid sequence, 523 residues long: 11-oxo-beta-amyrin 30-oxidase (523 aa).

A helical membrane pass occupies residues 9 to 29 (AIWVVLTVILAAIPIWVCHMV). Cys471 lines the heme pocket.

This sequence belongs to the cytochrome P450 family. It depends on heme as a cofactor. As to expression, expressed in roots, stolons and stems. Not detected in leaves.

It is found in the membrane. It carries out the reaction 11-oxo-beta-amyrin + 3 reduced [NADPH--hemoprotein reductase] + 3 O2 = glycyrrhetinate + 3 oxidized [NADPH--hemoprotein reductase] + 4 H2O + 4 H(+). The enzyme catalyses 11-oxo-beta-amyrin + reduced [NADPH--hemoprotein reductase] + O2 = 30-hydroxy-11-oxo-beta-amyrin + oxidized [NADPH--hemoprotein reductase] + H2O + H(+). It catalyses the reaction 30-hydroxy-11-oxo-beta-amyrin + reduced [NADPH--hemoprotein reductase] + O2 = glycyrrhetaldehyde + oxidized [NADPH--hemoprotein reductase] + 2 H2O + H(+). The catalysed reaction is glycyrrhetaldehyde + reduced [NADPH--hemoprotein reductase] + O2 = glycyrrhetinate + oxidized [NADPH--hemoprotein reductase] + H2O + 2 H(+). Its function is as follows. Involved in the biosynthesis of Glycyrrhetinic acid (GA), a natural product which exhibits anti-inflammatory activity. Involved in the biosynthesis of the triterpenoid saponin glycyrrhizin. Catalyzes three sequential oxidation steps at C-30 of 11-oxo-beta-amyrin. Also able to catalyze C-30 monohydroxylation of beta-amyrin to produce 30-hydroxy-beta-amyrin. May be also responsible for the oxidation at positions C-22 and C-29 in addition to C-30. In Glycyrrhiza uralensis (Chinese licorice), this protein is 11-oxo-beta-amyrin 30-oxidase.